The chain runs to 85 residues: Toxin Cll7 (85 aa).

The N-terminal stretch at 1–19 (MNSLLMITACLVLFGTVWA) is a signal peptide. In terms of domain architecture, LCN-type CS-alpha/beta spans 20-83 (KEGYLVNTYT…TWPLPNKTCG (64 aa)). Disulfide bonds link Cys31-Cys82, Cys35-Cys58, Cys44-Cys63, and Cys48-Cys65.

It belongs to the long (4 C-C) scorpion toxin superfamily. Sodium channel inhibitor family. Beta subfamily. In terms of tissue distribution, expressed by the venom gland.

The protein resides in the secreted. In terms of biological role, beta toxins bind voltage-independently at site-4 of sodium channels (Nav) and shift the voltage of activation toward more negative potentials thereby affecting sodium channel activation and promoting spontaneous and repetitive firing. The chain is Toxin Cll7 from Centruroides limpidus (Mexican scorpion).